Consider the following 551-residue polypeptide: Alkaline nuclease (551 aa).

It belongs to the herpesviridae alkaline nuclease family. In terms of assembly, interacts with major DNA-binding protein; this interaction increases the nuclease processivity of the alkaline exonuclease.

The protein resides in the host nucleus. Its subcellular location is the host cytoplasm. Its function is as follows. Plays a role in processing non linear or branched viral DNA intermediates in order to promote the production of mature packaged unit-length linear progeny viral DNA molecules. Exhibits endonuclease and exonuclease activities and accepts both double-stranded and single-stranded DNA as substrate. Exonuclease digestion of DNA is in the 5'-&gt; 3' direction and the products are 5'-monophosphate nucleosides. Additionally, forms a recombinase with the major DNA-binding protein, which displays strand exchange activity. The protein is Alkaline nuclease of Homo sapiens (Human).